A 407-amino-acid chain; its full sequence is Glucan 1,3-beta-glucosidase 1 (407 aa).

The first 22 residues, 1-22 (MLSFTSVFSFFLHALLLKTAFS), serve as a signal peptide directing secretion. The active-site Proton donor is E213. C295 and C406 are joined by a disulfide. The Nucleophile role is filled by E312.

This sequence belongs to the glycosyl hydrolase 5 (cellulase A) family.

The protein resides in the secreted. It carries out the reaction Successive hydrolysis of beta-D-glucose units from the non-reducing ends of (1-&gt;3)-beta-D-glucans, releasing alpha-glucose.. Beta-glucanases participate in the metabolism of beta-glucan, the main structural component of the cell wall. It could also function biosynthetically as a transglycosylase. This is Glucan 1,3-beta-glucosidase 1 (exg1) from Schizosaccharomyces pombe (strain 972 / ATCC 24843) (Fission yeast).